The primary structure comprises 30 residues: 136 kDa hydroxyproline-rich cell wall glycoprotein, major component (30 aa).

4-hydroxyproline is present on residues Pro8, Pro9, Pro10, Pro11, Pro12, Pro17, Pro18, Pro19, Pro20, Pro26, Pro27, Pro28, and Pro29.

Post-translationally, O-glycosylated.

The protein localises to the secreted. It is found in the cell wall. The protein is 136 kDa hydroxyproline-rich cell wall glycoprotein, major component of Phaseolus vulgaris (Kidney bean).